Here is a 257-residue protein sequence, read N- to C-terminus: Urease accessory protein UreD 3 (257 aa).

The interval 1–22 (MSVRATARLRAEPDGRDGTALP) is disordered.

It belongs to the UreD family. As to quaternary structure, ureD, UreF and UreG form a complex that acts as a GTP-hydrolysis-dependent molecular chaperone, activating the urease apoprotein by helping to assemble the nickel containing metallocenter of UreC. The UreE protein probably delivers the nickel.

The protein resides in the cytoplasm. Functionally, required for maturation of urease via the functional incorporation of the urease nickel metallocenter. In Streptomyces griseus subsp. griseus (strain JCM 4626 / CBS 651.72 / NBRC 13350 / KCC S-0626 / ISP 5235), this protein is Urease accessory protein UreD 3.